The primary structure comprises 139 residues: Stress-related protein 1 (139 aa).

Over residues 1–12 the composition is skewed to polar residues; the sequence is MTSESSTPTGST. The segment at 1 to 86 is disordered; the sequence is MTSESSTPTG…AERPGSATTP (86 aa). 2 stretches are compositionally biased toward low complexity: residues 14–53 and 60–74; these read ALPA…SLVV and SPVV…TRPR. Ser60 bears the Phosphoserine mark.

As to expression, embryo.

Involved in drought, heat, cold, and/or salt tolerance. The chain is Stress-related protein 1 (SRP1) from Zea mays (Maize).